A 706-amino-acid polypeptide reads, in one-letter code: Probable protein S-acyltransferase 20 (706 aa).

The next 2 membrane-spanning stretches (helical) occupy residues 16 to 36 (VIAI…FAPF) and 41 to 61 (IWEY…FVLY). Residues 172–222 (LFCTLCNCEVRKFSKHCRSCDKCVDCFDHHCKWLNNCVGRKNYVTFVSLMS) form the DHHC domain. Cys-202 (S-palmitoyl cysteine intermediate) is an active-site residue. The next 2 membrane-spanning stretches (helical) occupy residues 220–240 (LMSA…AVIV) and 275–295 (AVAI…MLLI). 3 disordered regions span residues 470-505 (SSLS…HVHE), 591-621 (LNPS…ALRD), and 680-706 (RDST…SNIK). 3 stretches are compositionally biased toward polar residues: residues 492–501 (HGMSNLSSPS), 591–603 (LNPS…TQNP), and 697–706 (ANSQTGSNIK).

Belongs to the DHHC palmitoyltransferase family.

The protein localises to the cell membrane. It is found in the cytoplasmic vesicle membrane. It catalyses the reaction L-cysteinyl-[protein] + hexadecanoyl-CoA = S-hexadecanoyl-L-cysteinyl-[protein] + CoA. In terms of biological role, palmitoyl acyltransferase. The protein is Probable protein S-acyltransferase 20 (PAT20) of Arabidopsis thaliana (Mouse-ear cress).